Reading from the N-terminus, the 180-residue chain is Pro-glucagon (180 aa).

Residues 1–20 form the signal peptide; sequence MKSIYFVAGLFVMLVQGSWQ. The disordered stretch occupies residues 23 to 56; sequence LQDTEEKPRSFSTSQTDLLDDPDQMNEDKRHSQG. S54 is modified (phosphoserine). The propeptide occupies 84 to 89; it reads NRNEIA. Phosphoserine is present on residues S105 and S108. R127 carries the arginine amide modification. The propeptide occupies 131-145; the sequence is DFPEEVTIVEELRRR. Phosphoserine is present on residues S150 and S152.

The protein belongs to the glucagon family. Proglucagon is post-translationally processed in a tissue-specific manner in pancreatic A cells and intestinal L cells. In pancreatic A cells, the major bioactive hormone is glucagon cleaved by PCSK2/PC2. In the intestinal L cells PCSK1/PC1 liberates GLP-1, GLP-2, glicentin and oxyntomodulin. GLP-1 is further N-terminally truncated by post-translational processing in the intestinal L cells resulting in GLP-1(7-37) GLP-1-(7-36)amide. The C-terminal amidation is neither important for the metabolism of GLP-1 nor for its effects on the endocrine pancreas. In terms of tissue distribution, glucagon is secreted in the A cells of the islets of Langerhans. GLP-1, GLP-2, oxyntomodulin and glicentin are secreted from enteroendocrine cells throughout the gastrointestinal tract. GLP-1 and GLP-2 are also secreted in selected neurons in the brain.

It localises to the secreted. Plays a key role in glucose metabolism and homeostasis. Regulates blood glucose by increasing gluconeogenesis and decreasing glycolysis. A counterregulatory hormone of insulin, raises plasma glucose levels in response to insulin-induced hypoglycemia. Plays an important role in initiating and maintaining hyperglycemic conditions in diabetes. In terms of biological role, potent stimulator of glucose-dependent insulin release. Also stimulates insulin release in response to IL6. Plays important roles on gastric motility and the suppression of plasma glucagon levels. May be involved in the suppression of satiety and stimulation of glucose disposal in peripheral tissues, independent of the actions of insulin. Has growth-promoting activities on intestinal epithelium. May also regulate the hypothalamic pituitary axis (HPA) via effects on LH, TSH, CRH, oxytocin, and vasopressin secretion. Increases islet mass through stimulation of islet neogenesis and pancreatic beta cell proliferation. Inhibits beta cell apoptosis. Functionally, stimulates intestinal growth and up-regulates villus height in the small intestine, concomitant with increased crypt cell proliferation and decreased enterocyte apoptosis. The gastrointestinal tract, from the stomach to the colon is the principal target for GLP-2 action. Plays a key role in nutrient homeostasis, enhancing nutrient assimilation through enhanced gastrointestinal function, as well as increasing nutrient disposal. Stimulates intestinal glucose transport and decreases mucosal permeability. Its function is as follows. Significantly reduces food intake. Inhibits gastric emptying in humans. Suppression of gastric emptying may lead to increased gastric distension, which may contribute to satiety by causing a sensation of fullness. May modulate gastric acid secretion and the gastro-pyloro-duodenal activity. May play an important role in intestinal mucosal growth in the early period of life. This chain is Pro-glucagon (GCG), found in Octodon degus (Degu).